The following is a 474-amino-acid chain: tRNA-2-methylthio-N(6)-dimethylallyladenosine synthase (474 aa).

The region spanning Lys3 to Arg120 is the MTTase N-terminal domain. [4Fe-4S] cluster-binding residues include Cys12, Cys49, Cys83, Cys157, Cys161, and Cys164. A Radical SAM core domain is found at Arg143–Arg375. The TRAM domain maps to Arg378–Arg441.

It belongs to the methylthiotransferase family. MiaB subfamily. Monomer. [4Fe-4S] cluster serves as cofactor.

It localises to the cytoplasm. The enzyme catalyses N(6)-dimethylallyladenosine(37) in tRNA + (sulfur carrier)-SH + AH2 + 2 S-adenosyl-L-methionine = 2-methylsulfanyl-N(6)-dimethylallyladenosine(37) in tRNA + (sulfur carrier)-H + 5'-deoxyadenosine + L-methionine + A + S-adenosyl-L-homocysteine + 2 H(+). Functionally, catalyzes the methylthiolation of N6-(dimethylallyl)adenosine (i(6)A), leading to the formation of 2-methylthio-N6-(dimethylallyl)adenosine (ms(2)i(6)A) at position 37 in tRNAs that read codons beginning with uridine. The protein is tRNA-2-methylthio-N(6)-dimethylallyladenosine synthase of Shewanella sp. (strain MR-7).